A 135-amino-acid polypeptide reads, in one-letter code: ATP synthase epsilon chain (135 aa).

Residues T101–F122 are disordered.

The protein belongs to the ATPase epsilon chain family. As to quaternary structure, F-type ATPases have 2 components, CF(1) - the catalytic core - and CF(0) - the membrane proton channel. CF(1) has five subunits: alpha(3), beta(3), gamma(1), delta(1), epsilon(1). CF(0) has three main subunits: a, b and c.

It localises to the cellular thylakoid membrane. Its function is as follows. Produces ATP from ADP in the presence of a proton gradient across the membrane. The sequence is that of ATP synthase epsilon chain from Synechococcus sp. (strain CC9311).